A 190-amino-acid chain; its full sequence is MAVFEGTFTQTEPLRLAIVIGRFNDLVTTKLLAGCQDCLKRHGVDPDPHGNQVDYVWVPGSFEVPLVARQLALTHRYDAIICLGAVIRGQTPHFDYVSAEVSKGIAAASFQTGVPVIFGILTVDTMQQALERAGIKANHGWDYAMNALEMASLMRQLRSNVTDSYTQTQSLPAAFPNASIGKLTAESEEV.

5-amino-6-(D-ribitylamino)uracil contacts are provided by residues Phe23, 61-63, and 85-87; these read SFE and AVI. (2S)-2-hydroxy-3-oxobutyl phosphate is bound at residue 90–91; it reads QT. The active-site Proton donor is the His93. Residue Phe118 participates in 5-amino-6-(D-ribitylamino)uracil binding. Arg132 is a (2S)-2-hydroxy-3-oxobutyl phosphate binding site.

It belongs to the DMRL synthase family.

The catalysed reaction is (2S)-2-hydroxy-3-oxobutyl phosphate + 5-amino-6-(D-ribitylamino)uracil = 6,7-dimethyl-8-(1-D-ribityl)lumazine + phosphate + 2 H2O + H(+). The protein operates within cofactor biosynthesis; riboflavin biosynthesis; riboflavin from 2-hydroxy-3-oxobutyl phosphate and 5-amino-6-(D-ribitylamino)uracil: step 1/2. Functionally, catalyzes the formation of 6,7-dimethyl-8-ribityllumazine by condensation of 5-amino-6-(D-ribitylamino)uracil with 3,4-dihydroxy-2-butanone 4-phosphate. This is the penultimate step in the biosynthesis of riboflavin. The sequence is that of 6,7-dimethyl-8-ribityllumazine synthase from Trichormus variabilis (strain ATCC 29413 / PCC 7937) (Anabaena variabilis).